Reading from the N-terminus, the 352-residue chain is C-C chemokine receptor type 5 (352 aa).

The Extracellular segment spans residues 1–30; that stretch reads MDYQVSSPTYDIDYYTSEPCQKINVKQIAA. At Tyr-3 the chain carries Sulfotyrosine. Residues Ser-6 and Ser-7 are each glycosylated (O-linked (GalNAc...) serine). 3 positions are modified to sulfotyrosine: Tyr-10, Tyr-14, and Tyr-15. Disulfide bonds link Cys-20–Cys-269 and Cys-101–Cys-178. Residues 31–58 form a helical membrane-spanning segment; it reads RLLPPLYSLVFIFGFVGNILVVLILINC. At 59 to 68 the chain is on the cytoplasmic side; the sequence is KRLKSMTDIY. The chain crosses the membrane as a helical span at residues 69 to 89; that stretch reads LLNLAISDLLFLLTVPFWAHY. The Extracellular segment spans residues 90–102; that stretch reads AAAQWDFGNTMCQ. A helical membrane pass occupies residues 103–124; sequence LLTGLYFIGFFSGIFFIILLTI. The Cytoplasmic portion of the chain corresponds to 125–141; that stretch reads DRYLAIVHAVFALKART. Residues 142–166 traverse the membrane as a helical segment; it reads VTFGVVTSVITWVVAVFASLPGIIF. At 167-198 the chain is on the extracellular side; sequence TRSQREGLHYTCSSHFPYSQYQFWKNFQTLKI. Residues 199–218 form a helical membrane-spanning segment; the sequence is VILGLVLPLLVMVICYSGIL. Residues 219 to 235 lie on the Cytoplasmic side of the membrane; that stretch reads KTLLRCRNEKKRHRAVR. The chain crosses the membrane as a helical span at residues 236 to 260; that stretch reads LIFTIMIVYFLFWAPYNIVLLLNTF. Residues 261 to 277 are Extracellular-facing; sequence QEFFGLNNCSSSNRLDQ. Residues 278 to 301 traverse the membrane as a helical segment; sequence AMQVTETLGMTHCCINPIIYAFVG. Residues 302–352 lie on the Cytoplasmic side of the membrane; that stretch reads EKFRNYLLVFFQKHIAKRFCKCCSIFQQEASERASSVYTRSTGEQEISVGL. Residues Cys-321, Cys-323, and Cys-324 are each lipidated (S-palmitoyl cysteine). Residues Ser-336, Ser-337, Ser-342, and Ser-349 each carry the phosphoserine; by BARK1 modification.

The protein belongs to the G-protein coupled receptor 1 family. Interacts with PRAF2. Efficient ligand binding to CCL3/MIP-1alpha and CCL4/MIP-1beta requires sulfation, O-glycosylation and sialic acid modifications. Glycosylation on Ser-6 is required for efficient binding of CCL4. Interacts with GRK2. Interacts with ARRB1 and ARRB2. Interacts with CNIH4. Interacts with S100A4; this interaction stimulates T-lymphocyte chemotaxis. Post-translationally, sulfated on at least 2 of the N-terminal tyrosines. Sulfation is required for efficient binding of the chemokines, CCL3 and CCL4. Palmitoylation in the C-terminal is important for cell surface expression. In terms of processing, phosphorylation on serine residues in the C-terminal is stimulated by binding CC chemokines especially by APO-RANTES. Post-translationally, O-glycosylated, but not N-glycosylated. Ser-6 appears to be the major site even if Ser-7 may be also O-glycosylated. Also sialylated glycans present which contribute to chemokine binding. Thr-16 and Ser-17 may also be glycosylated and, if so, with small moieties such as a T-antigen.

The protein localises to the cell membrane. Its function is as follows. Receptor for a number of inflammatory CC-chemokines including CCL3/MIP-1-alpha, CCL4/MIP-1-beta and RANTES and subsequently transduces a signal by increasing the intracellular calcium ion level. May play a role in the control of granulocytic lineage proliferation or differentiation. Participates in T-lymphocyte migration to the infection site by acting as a chemotactic receptor. This is C-C chemokine receptor type 5 (CCR5) from Cercocebus galeritus (Tana river mangabey).